A 132-amino-acid chain; its full sequence is MDFYRILVICIHVYTRLVFAPLKKDLKLLRLISLCIPIIRPFSFLIYPPPKSFSPLNSILPSILPIIPFAISSSLLFSYTFHVFYRFLFQPLLSVPYANSKQTNCLLVASFVYLPYRSPLPVVIEIMVQRYL.

Helical transmembrane passes span 28–48, 59–79, and 106–126; these read LLRL…LIYP, ILPS…LFSY, and LLVA…VIEI.

It localises to the membrane. This is an uncharacterized protein from Schizosaccharomyces pombe (strain 972 / ATCC 24843) (Fission yeast).